We begin with the raw amino-acid sequence, 276 residues long: Large ribosomal subunit protein uL2 (276 aa).

Disordered regions lie at residues 34-55 and 221-276; these read LQPLKNNAGRNNNGRITVRHQG and RGSV…RRTK. A compositionally biased stretch (polar residues) spans 37-48; that stretch reads LKNNAGRNNNGR.

Belongs to the universal ribosomal protein uL2 family. In terms of assembly, part of the 50S ribosomal subunit. Forms a bridge to the 30S subunit in the 70S ribosome.

Functionally, one of the primary rRNA binding proteins. Required for association of the 30S and 50S subunits to form the 70S ribosome, for tRNA binding and peptide bond formation. It has been suggested to have peptidyltransferase activity; this is somewhat controversial. Makes several contacts with the 16S rRNA in the 70S ribosome. In Enterococcus faecalis (strain ATCC 700802 / V583), this protein is Large ribosomal subunit protein uL2.